We begin with the raw amino-acid sequence, 87 residues long: U14-lycotoxin-Ls1b (87 aa).

The first 20 residues, 1 to 20, serve as a signal peptide directing secretion; sequence MNSKVFVVLLLLALSTCVLS. In terms of domain architecture, WAP spans 21-66; the sequence is EKYCPTPRNTSCKKMNIRNNCCRDSDCTSNAFCCAEPCGNFCHKAS. 5 disulfide bridges follow: C24–C54, C32–C58, C41–C53, C42–C80, and C47–C62.

The protein belongs to the venom protein 11 family. 01 (wap-1) subfamily. Contains 5 disulfide bonds. In terms of tissue distribution, expressed by the venom gland.

The protein resides in the secreted. In terms of biological role, has antibacterial activity. The sequence is that of U14-lycotoxin-Ls1b from Lycosa singoriensis (Wolf spider).